We begin with the raw amino-acid sequence, 157 residues long: Heat shock 22 kDa protein, chloroplastic (157 aa).

The region spanning 40–155 is the sHSP domain; it reads GKAGHTHAPM…KPEPKRIAVT (116 aa).

This sequence belongs to the small heat shock protein (HSP20) family.

Its subcellular location is the plastid. The protein resides in the chloroplast. The polypeptide is Heat shock 22 kDa protein, chloroplastic (Chlamydomonas reinhardtii (Chlamydomonas smithii)).